A 4592-amino-acid chain; its full sequence is Intermembrane lipid transfer protein vps13D (4592 aa).

The Chorein N-terminal domain maps to 3-102 (FESVVAEVID…SSTNVSSNYS (100 aa)). Disordered stretches follow at residues 95–142 (TNVS…TASQ), 157–199 (LDKK…IDSQ), 286–307 (STTS…SSSS), 445–529 (KKDD…IKGI), 574–605 (SNST…LSPM), 826–861 (NYNN…QQGI), 1040–1083 (TTSP…KRQW), 1219–1249 (YFKN…EKKP), 1655–1717 (QQQE…QQSN), 1855–1886 (SNNN…NSLF), 1971–2001 (TSSL…TTTS), 2025–2056 (PLIN…EQQQ), and 2245–2270 (NNNN…NIIN). Low complexity-rich tracts occupy residues 117-139 (SSSN…TTST) and 172-199 (KSTN…IDSQ). A coiled-coil region spans residues 437–517 (KNATIKLNKK…KKKEEKGKSK (81 aa)). Residues 445–457 (KKDDKKDDKKDDI) are compositionally biased toward basic and acidic residues. A compositionally biased stretch (low complexity) spans 458–474 (NSSSSSIGSSNSSNNTP). Positions 475 to 529 (TKDKNKEKEKDKEKEKEKEKKKEKEKLKLEEKKKKKEEKGKSKSKDSKKNKIKGI) are enriched in basic and acidic residues. Positions 574–591 (SNSTTTNNSNNNSSSSPN) are enriched in low complexity. Positions 592–603 (ILATSPSNNSLS) are enriched in polar residues. The segment covering 829–838 (NQSSSSSSSS) has biased composition (low complexity). Positions 1040-1059 (TTSPTFNSLNNKPSTLQNNH) are enriched in polar residues. A compositionally biased stretch (low complexity) spans 1064–1076 (NGNSSNNNNTDSP). Residues 1234 to 1244 (NTEDDEQEEEE) are compositionally biased toward acidic residues. 2 stretches are compositionally biased toward low complexity: residues 1669–1689 (KSIN…LRKS) and 1702–1715 (QQQQ…QQQQ). Positions 2037–2048 (SKSSSSKSSSSK) are enriched in low complexity. The TPR 1 repeat unit spans residues 2321–2354 (TLQINDLGANIISIGNKSTSIKCFLRSIRLSDSR). Disordered stretches follow at residues 2456 to 2489 (KTNN…SIST), 2862 to 2882 (AVST…NNNG), 3006 to 3035 (GEQK…SSSS), 3106 to 3129 (NSSG…SSSN), 3356 to 3384 (KLPT…KRTT), 3560 to 3580 (NSLK…HRHN), and 3630 to 3679 (STNH…SKLK). Low complexity-rich tracts occupy residues 2458 to 2478 (NNNN…NNNN), 2864 to 2880 (STSN…SNNN), and 3015 to 3035 (TSTS…SSSS). Over residues 3358-3384 (PTSPQTSSSSSPPPATTTTSTTTKRTT) the composition is skewed to low complexity. The segment covering 3569–3580 (KSKKQQQQHRHN) has biased composition (basic residues). A compositionally biased stretch (low complexity) spans 3640–3679 (SSTFNNSSNDNINNGNSNNNTSNSLSPPSSSSSINLSKLK). The TPR 2 repeat unit spans residues 3789 to 3822 (EVPKPYLGRVDIKDNDTHTSIHFYDQDTEYSPFR). Low complexity-rich tracts occupy residues 3872–3894 (TTTT…NNNN) and 4111–4135 (QQLQ…NPIN). Disordered regions lie at residues 3872–3897 (TTTT…NQYI) and 4105–4135 (KKHK…NPIN).

The protein localises to the membrane. Its function is as follows. Mediates the transfer of lipids between membranes at organelle contact sites. The chain is Intermembrane lipid transfer protein vps13D (vps13D) from Dictyostelium discoideum (Social amoeba).